We begin with the raw amino-acid sequence, 485 residues long: NADH-quinone oxidoreductase subunit N (485 aa).

Transmembrane regions (helical) follow at residues 8–28 (LIAL…MLSI), 35–55 (FLNA…LWFV), 71–91 (GFAM…CTFA), 105–125 (FYLL…ANHL), 127–147 (SLFL…GYAF), 159–179 (YTIL…LVYA), 203–223 (LLAG…LVPF), 235–255 (PAPV…GVVM), 271–291 (VVLA…ALSQ), 297–317 (LLGY…IALQ), 326–346 (VGVY…VVSL), 373–393 (AAVM…LGFI), 408–430 (WWLV…RVAV), and 455–475 (IVVL…QPLI).

This sequence belongs to the complex I subunit 2 family. In terms of assembly, NDH-1 is composed of 13 different subunits. Subunits NuoA, H, J, K, L, M, N constitute the membrane sector of the complex.

It localises to the cell inner membrane. It carries out the reaction a quinone + NADH + 5 H(+)(in) = a quinol + NAD(+) + 4 H(+)(out). In terms of biological role, NDH-1 shuttles electrons from NADH, via FMN and iron-sulfur (Fe-S) centers, to quinones in the respiratory chain. The immediate electron acceptor for the enzyme in this species is believed to be ubiquinone. Couples the redox reaction to proton translocation (for every two electrons transferred, four hydrogen ions are translocated across the cytoplasmic membrane), and thus conserves the redox energy in a proton gradient. This chain is NADH-quinone oxidoreductase subunit N, found in Escherichia coli O81 (strain ED1a).